A 320-amino-acid chain; its full sequence is Olfactory receptor 52N1 (320 aa).

At 1–27 the chain is on the extracellular side; that stretch reads MSFLNGTSLTPASFILNGIPGLEDVHL. N-linked (GlcNAc...) asparagine glycosylation is present at asparagine 5. Residues 28 to 48 traverse the membrane as a helical segment; it reads WISFPLCTMYSIAITGNFGLM. Topologically, residues 49–56 are cytoplasmic; that stretch reads YLIYCDEA. A helical transmembrane segment spans residues 57–77; that stretch reads LHRPMYVFLALLSFTDVLMCT. Topologically, residues 78-101 are extracellular; sequence STLPNTLFILWFNLKEIDFKACLA. The cysteines at positions 99 and 191 are disulfide-linked. A helical membrane pass occupies residues 102–122; the sequence is QMFFVHTFTGMESGVLMLMAL. Residues 123-141 are Cytoplasmic-facing; it reads DHCVAICFPLRYATILTNS. Residues 142–162 form a helical membrane-spanning segment; it reads VIAKAGFLTFLRGVMLVIPST. Topologically, residues 163–198 are extracellular; it reads FLTKRLPYCKGNVIPHTYCDHMSVAKISCGNVRVNA. Residues 199–219 traverse the membrane as a helical segment; sequence IYGLIVALLIGGFDILCITIS. The Cytoplasmic portion of the chain corresponds to 220–239; that stretch reads YTMILQAVVSLSSADARQKA. Residues 240 to 260 form a helical membrane-spanning segment; that stretch reads FSTCTAHFCAIVLTYVPAFFT. Topologically, residues 261 to 276 are extracellular; sequence FFTHHFGGHTIPLHIH. Residues 277–297 form a helical membrane-spanning segment; sequence IIMANLYLLMPPTMNPIVYGV. The Cytoplasmic portion of the chain corresponds to 298-320; that stretch reads KTRQVRESVIRFFLKGKDNSHNF.

It belongs to the G-protein coupled receptor 1 family.

It is found in the cell membrane. Functionally, odorant receptor. The protein is Olfactory receptor 52N1 (OR52N1) of Homo sapiens (Human).